The primary structure comprises 1238 residues: DNA-directed RNA polymerase subunit beta (1238 aa).

Positions 1187–1238 are disordered; it reads EGREDTPPEEVYEESYEEGFEEEIEELPEDIDFEPDSFDIENDDLDLEDFDI. The span at 1193–1238 shows a compositional bias: acidic residues; that stretch reads PPEEVYEESYEEGFEEEIEELPEDIDFEPDSFDIENDDLDLEDFDI.

Belongs to the RNA polymerase beta chain family. In terms of assembly, the RNAP catalytic core consists of 2 alpha, 1 beta, 1 beta' and 1 omega subunit. When a sigma factor is associated with the core the holoenzyme is formed, which can initiate transcription.

It catalyses the reaction RNA(n) + a ribonucleoside 5'-triphosphate = RNA(n+1) + diphosphate. Functionally, DNA-dependent RNA polymerase catalyzes the transcription of DNA into RNA using the four ribonucleoside triphosphates as substrates. The chain is DNA-directed RNA polymerase subunit beta from Thermoanaerobacter pseudethanolicus (strain ATCC 33223 / 39E) (Clostridium thermohydrosulfuricum).